The chain runs to 225 residues: Ribonuclease T (225 aa).

Residues 1–21 (MSEDHFDDEHEGHGGGGGSRH) form a disordered region. In terms of domain architecture, Exonuclease spans 33-207 (VVVDVETGGF…YDTEKTAELF (175 aa)). D36, E38, H194, and D199 together coordinate Mg(2+). H194 (proton donor/acceptor) is an active-site residue.

This sequence belongs to the RNase T family. In terms of assembly, homodimer. Mg(2+) is required as a cofactor.

Its function is as follows. Trims short 3' overhangs of a variety of RNA species, leaving a one or two nucleotide 3' overhang. Responsible for the end-turnover of tRNA: specifically removes the terminal AMP residue from uncharged tRNA (tRNA-C-C-A). Also appears to be involved in tRNA biosynthesis. In Pseudomonas savastanoi pv. phaseolicola (strain 1448A / Race 6) (Pseudomonas syringae pv. phaseolicola (strain 1448A / Race 6)), this protein is Ribonuclease T.